Consider the following 156-residue polypeptide: ATP synthase subunit b (156 aa).

A helical transmembrane segment spans residues 5–25 (LTLIGQAIAFAFFVAFCMKFV).

Belongs to the ATPase B chain family. F-type ATPases have 2 components, F(1) - the catalytic core - and F(0) - the membrane proton channel. F(1) has five subunits: alpha(3), beta(3), gamma(1), delta(1), epsilon(1). F(0) has three main subunits: a(1), b(2) and c(10-14). The alpha and beta chains form an alternating ring which encloses part of the gamma chain. F(1) is attached to F(0) by a central stalk formed by the gamma and epsilon chains, while a peripheral stalk is formed by the delta and b chains.

It localises to the cell inner membrane. Its function is as follows. F(1)F(0) ATP synthase produces ATP from ADP in the presence of a proton or sodium gradient. F-type ATPases consist of two structural domains, F(1) containing the extramembraneous catalytic core and F(0) containing the membrane proton channel, linked together by a central stalk and a peripheral stalk. During catalysis, ATP synthesis in the catalytic domain of F(1) is coupled via a rotary mechanism of the central stalk subunits to proton translocation. Functionally, component of the F(0) channel, it forms part of the peripheral stalk, linking F(1) to F(0). The polypeptide is ATP synthase subunit b (Acinetobacter baumannii (strain AYE)).